The chain runs to 184 residues: Cytidylate kinase (184 aa).

An ATP-binding site is contributed by 8 to 16 (GQPGSGKTT).

This sequence belongs to the cytidylate kinase family. Type 2 subfamily.

Its subcellular location is the cytoplasm. It catalyses the reaction CMP + ATP = CDP + ADP. The enzyme catalyses dCMP + ATP = dCDP + ADP. This is Cytidylate kinase from Pyrobaculum neutrophilum (strain DSM 2338 / JCM 9278 / NBRC 100436 / V24Sta) (Thermoproteus neutrophilus).